A 236-amino-acid polypeptide reads, in one-letter code: Acetate--CoA ligase [ADP-forming] II subunit beta (236 aa).

In terms of domain architecture, ATP-grasp spans 26–62 (KQVLKAYGLPVPEEKLAKTLDEALKYAEEIGYPVAMK). 52-63 (AEEIGYPVAMKL) serves as a coordination point for ATP.

It belongs to the acetate CoA ligase beta subunit family. In terms of assembly, heterotetramer of two alpha and two beta subunits.

It catalyses the reaction acetate + ATP + CoA = acetyl-CoA + ADP + phosphate. Catalyzes the reversible formation of acetate and ATP from acetyl-CoA by using ADP and phosphate. Can use other substrates such as phenylacetyl-CoA, indoleacetyl-CoA and isobutyryl-CoA, but not succinyl-CoA. Seems to be involved primarily in the degradation of aryl-CoA esters to the corresponding acids. Participates in the conversion of acetyl-CoA to acetate and in the degradation of branched-chain amino acids via branched-chain-acyl-CoA esters. This is Acetate--CoA ligase [ADP-forming] II subunit beta from Pyrococcus furiosus (strain ATCC 43587 / DSM 3638 / JCM 8422 / Vc1).